The sequence spans 521 residues: MTTRLLQLTRPHYRLLSLPLQKPFNIKRQMSAANPSPFGNYLNTITKSLQQNLQTCFHFQAKEIDIIESPSQFYDLLKTKILNSQNRIFIASLYLGKSETELVDCISQALTKNPKLKVSFLLDGLRGTRELPSACSATLLSSLVAKYGSERVDCRLYKTPAYHGWKKVLVPKRFNEGLGLQHMKIYGFDNEVILSGANLSNDYFTNRQDRYYLFKSRNFSNYYFKLHQLISSFSYQIIKPMVDGSINIIWPDSNPTVEPTKNKRLFLREASQLLDGFLKSSKQSLPITAVGQFSTLVYPISQFTPLFPKYNDKSTEKRTILSLLSTITSNAISWTFTAGYFNILPDIKAKLLATPVAEANVITASPFANGFYQSKGVSSNLPGAYLYLSKKFLQDVCRYRQDHAITLREWQRGVVNKPNGWSYHAKGIWLSARDKNDANNWKPFITVIGSSNYTRRAYSLDLESNALIITRDEELRKKMKAELDNLLQYTKPVTLEDFQSDPERHVGTGVKIATSILGKKL.

91-98 (ASLYLGKS) is a binding site for ATP. 2 consecutive PLD phosphodiesterase domains span residues 177 to 203 (GLGL…SNDY) and 419 to 457 (NGWS…TRRA). Residues His-182, Lys-184, and Asp-189 contribute to the active site.

Belongs to the CDP-alcohol phosphatidyltransferase class-II family.

The protein resides in the mitochondrion. The catalysed reaction is a CDP-1,2-diacyl-sn-glycerol + sn-glycerol 3-phosphate = a 1,2-diacyl-sn-glycero-3-phospho-(1'-sn-glycero-3'-phosphate) + CMP + H(+). Its pathway is phospholipid metabolism; phosphatidylglycerol biosynthesis; phosphatidylglycerol from CDP-diacylglycerol: step 1/2. Functionally, essential for the viability of mitochondrial petite mutant. Catalyzes the committed step to the synthesis of the acidic phospholipids. In Saccharomyces cerevisiae (strain ATCC 204508 / S288c) (Baker's yeast), this protein is CDP-diacylglycerol--glycerol-3-phosphate 3-phosphatidyltransferase (PGS1).